Reading from the N-terminus, the 476-residue chain is Cysteine--tRNA ligase (476 aa).

Cysteine 29 contributes to the Zn(2+) binding site. A 'HIGH' region motif is present at residues 31–41; that stretch reads PTVYDYPHLGH. 3 residues coordinate Zn(2+): cysteine 209, histidine 234, and glutamate 238. The 'KMSKS' region signature appears at 266–270; sequence KMSKS. Lysine 269 lines the ATP pocket.

This sequence belongs to the class-I aminoacyl-tRNA synthetase family. Zn(2+) serves as cofactor.

The protein resides in the cytoplasm. It catalyses the reaction tRNA(Cys) + L-cysteine + ATP = L-cysteinyl-tRNA(Cys) + AMP + diphosphate. The chain is Cysteine--tRNA ligase (cysS) from Pyrococcus horikoshii (strain ATCC 700860 / DSM 12428 / JCM 9974 / NBRC 100139 / OT-3).